Reading from the N-terminus, the 305-residue chain is Probable GTP 3',8-cyclase (305 aa).

The Radical SAM core domain occupies 6–233 (RHGRPVMSLR…MQDRKKYYID (228 aa)). Arg-15 is a binding site for GTP. [4Fe-4S] cluster-binding residues include Cys-22 and Cys-26. Tyr-28 is a binding site for S-adenosyl-L-methionine. Cys-29 is a [4Fe-4S] cluster binding site. Arg-62 is a GTP binding site. Gly-66 contributes to the S-adenosyl-L-methionine binding site. Thr-92 provides a ligand contact to GTP. Ser-116 is a binding site for S-adenosyl-L-methionine. GTP is bound at residue Lys-153. 2 residues coordinate [4Fe-4S] cluster: Cys-249 and Cys-252. GTP is bound at residue 254 to 256 (RLR). Cys-266 provides a ligand contact to [4Fe-4S] cluster.

This sequence belongs to the radical SAM superfamily. MoaA family. [4Fe-4S] cluster serves as cofactor.

It catalyses the reaction GTP + AH2 + S-adenosyl-L-methionine = (8S)-3',8-cyclo-7,8-dihydroguanosine 5'-triphosphate + 5'-deoxyadenosine + L-methionine + A + H(+). The protein operates within cofactor biosynthesis; molybdopterin biosynthesis. Catalyzes the cyclization of GTP to (8S)-3',8-cyclo-7,8-dihydroguanosine 5'-triphosphate. This Methanothermobacter thermautotrophicus (strain ATCC 29096 / DSM 1053 / JCM 10044 / NBRC 100330 / Delta H) (Methanobacterium thermoautotrophicum) protein is Probable GTP 3',8-cyclase.